The sequence spans 167 residues: Intermembrane phospholipid transport system binding protein MlaD (167 aa).

Topologically, residues 1–6 (MRQTIK) are cytoplasmic. Residues 7-27 (YEFWVGLFLLLGIGALVFLGL) traverse the membrane as a helical; Signal-anchor for type II membrane protein segment. Topologically, residues 28 to 167 (RVANVQGFAE…GNEKSESTEQ (140 aa)) are periplasmic. The segment at 40–118 (SYTVTATFDN…GEQYIALTMG (79 aa)) is MCE/MlaD.

The protein belongs to the MlaD family. As to quaternary structure, the complex is composed of two ATP-binding proteins (MlaF), two transmembrane proteins (MlaE), two cytoplasmic solute-binding proteins (MlaB) and six periplasmic solute-binding proteins (MlaD).

It localises to the cell inner membrane. Part of the ABC transporter complex MlaFEDB, which is involved in a phospholipid transport pathway that maintains lipid asymmetry in the outer membrane by retrograde trafficking of phospholipids from the outer membrane to the inner membrane. MlaD functions in substrate binding with strong affinity for phospholipids and modulates ATP hydrolytic activity of the complex. The protein is Intermembrane phospholipid transport system binding protein MlaD of Haemophilus influenzae (strain ATCC 51907 / DSM 11121 / KW20 / Rd).